The primary structure comprises 459 residues: Arginine biosynthesis bifunctional protein ArgJ, mitochondrial (459 aa).

Residues Thr187, Lys216, Thr227, Glu314, Asn454, and Thr459 each contribute to the substrate site. The Nucleophile role is filled by Thr227.

Belongs to the ArgJ family. Heterodimer of an alpha and a beta chain. Post-translationally, the alpha and beta chains are autoproteolytically processed from a single precursor protein within the mitochondrion.

Its subcellular location is the mitochondrion matrix. The enzyme catalyses N(2)-acetyl-L-ornithine + L-glutamate = N-acetyl-L-glutamate + L-ornithine. It catalyses the reaction L-glutamate + acetyl-CoA = N-acetyl-L-glutamate + CoA + H(+). Its pathway is amino-acid biosynthesis; L-arginine biosynthesis; L-ornithine and N-acetyl-L-glutamate from L-glutamate and N(2)-acetyl-L-ornithine (cyclic): step 1/1. It participates in amino-acid biosynthesis; L-arginine biosynthesis; N(2)-acetyl-L-ornithine from L-glutamate: step 1/4. Catalyzes two activities which are involved in the cyclic version of arginine biosynthesis: the synthesis of acetylglutamate from glutamate and acetyl-CoA, and of ornithine by transacetylation between acetylornithine and glutamate. This chain is Arginine biosynthesis bifunctional protein ArgJ, mitochondrial, found in Uncinocarpus reesii (strain UAMH 1704).